We begin with the raw amino-acid sequence, 454 residues long: Tubulin beta-2 chain (454 aa).

GTP-binding residues include Gln11, Glu69, Ser138, Gly142, Thr143, Gly144, Asn204, and Asn226. Glu69 is a binding site for Mg(2+). The tract at residues 426–454 (QEASVDDEAMEDDAEAEGGAGQNEAVEEF) is disordered. Positions 429–441 (SVDDEAMEDDAEA) are enriched in acidic residues.

This sequence belongs to the tubulin family. In terms of assembly, dimer of alpha and beta chains. A typical microtubule is a hollow water-filled tube with an outer diameter of 25 nm and an inner diameter of 15 nM. Alpha-beta heterodimers associate head-to-tail to form protofilaments running lengthwise along the microtubule wall with the beta-tubulin subunit facing the microtubule plus end conferring a structural polarity. Microtubules usually have 13 protofilaments but different protofilament numbers can be found in some organisms and specialized cells. The cofactor is Mg(2+).

It is found in the cytoplasm. The protein localises to the cytoskeleton. The protein resides in the spindle. It localises to the nucleus. In terms of biological role, tubulin is the major constituent of microtubules, a cylinder consisting of laterally associated linear protofilaments composed of alpha- and beta-tubulin heterodimers. Microtubules grow by the addition of GTP-tubulin dimers to the microtubule end, where a stabilizing cap forms. Below the cap, tubulin dimers are in GDP-bound state, owing to GTPase activity of alpha-tubulin. Functionally, this is the major beta tubulin of mitotic spindle. This chain is Tubulin beta-2 chain (BETC), found in Physarum polycephalum (Slime mold).